We begin with the raw amino-acid sequence, 382 residues long: MSLKEKTQSLFANAFGYPATHTIQAPGRVNLIGEHTDYNDGFVLPCAIDYQTVISCAPRDDRKVRVMAADYENQLDEFSLDAPIVAHENYQWANYVRGVVKHLQLRNNSFGGVDMVISGNVPQGAGLSSSASLEVAVGTVLQQLYHLPLDGAQIALNGQEAENQFVGCNCGIMDQLISALGKKDHALLIDCRSLGTKAVSMPKGVAVVIINSNFKRTLVGSEYNTRREQCETGARFFQQPALRDVTIEEFNAVAHELDPIVAKRVRHILTENARTVEAASALEQGDLKRMGELMAESHASMRDDFEITVPQIDTLVEIVKAVIGDKGGVRMTGGGFGGCIVALIPEELVPAVQQAVAEQYEAKTGIKETFYVCKPSQGAGQC.

34–37 (EHTD) is a binding site for substrate. An ATP-binding site is contributed by 124–130 (GAGLSSS). Residues Ser130 and Glu162 each coordinate Mg(2+). Asp174 (proton acceptor) is an active-site residue. Tyr223 provides a ligand contact to substrate.

Belongs to the GHMP kinase family. GalK subfamily.

The protein resides in the cytoplasm. The enzyme catalyses alpha-D-galactose + ATP = alpha-D-galactose 1-phosphate + ADP + H(+). The protein operates within carbohydrate metabolism; galactose metabolism. Catalyzes the transfer of the gamma-phosphate of ATP to D-galactose to form alpha-D-galactose-1-phosphate (Gal-1-P). This chain is Galactokinase, found in Escherichia coli O157:H7 (strain EC4115 / EHEC).